The chain runs to 291 residues: uncharacterized protein (291 aa).

2 disordered regions span residues 29-50 and 168-291; these read SEKP…LRDS and RKVK…AELK. Serine 50 is subject to Phosphoserine. Composition is skewed to polar residues over residues 176–186 and 205–217; these read NSKNPSKTGTP and QKNS…SKLI. Over residues 221–237 the composition is skewed to basic and acidic residues; the sequence is YKDEWLQQQKAEADRRT. Residues 280 to 291 show a composition bias toward polar residues; it reads SSPSESTPAELK.

This is an uncharacterized protein from Mus musculus (Mouse).